Consider the following 324-residue polypeptide: Probable 6-phosphogluconolactonase 4, chloroplastic (324 aa).

Residues 1–63 (MSVSAAVAAA…PAMATDGAAA (63 aa)) constitute a chloroplast transit peptide. The interval 19–43 (ARHRSPPASRVAATSRGRPFSSGPH) is disordered.

Belongs to the glucosamine/galactosamine-6-phosphate isomerase family. 6-phosphogluconolactonase subfamily.

The protein resides in the plastid. The protein localises to the chloroplast. It catalyses the reaction 6-phospho-D-glucono-1,5-lactone + H2O = 6-phospho-D-gluconate + H(+). It participates in carbohydrate degradation; pentose phosphate pathway; D-ribulose 5-phosphate from D-glucose 6-phosphate (oxidative stage): step 2/3. In terms of biological role, hydrolysis of 6-phosphogluconolactone to 6-phosphogluconate. The polypeptide is Probable 6-phosphogluconolactonase 4, chloroplastic (Oryza sativa subsp. japonica (Rice)).